A 431-amino-acid polypeptide reads, in one-letter code: MLPTAVLLVLVVSVVAKDNATCDGPCGLRFRQNPQGGFRVVGGQAAQQGAWPWMVSLQIFTPRNNRRYHACGGVLLNAHWVLTAAHCFNNKQKVYEWRMVFGAQEIEYGTDKPVRPPLQERYVEKVVTHDQYNYMTEGNDIALLKITPPVPCGPFIGPGCLPNSKAGPPKAAQTCYVAGWGYVKENAPRPSPTLMEARVDLINLELCNSTQWYNGRITASNLCAGYPSGKIDTCQGDSGGPLMCRENQGEPFVVQGITSWGVGCARAKRPGIYTATWPFLDWIASRIGSNALRMIQPATPTPPTTRSPGVHQPPSAHPPWYFQHASGPPHPHPHPHPHPHPRPPQPPAAQAPPPPPPPPPPPPPPPPPPPPPPPPPPPASTKPPQALSFAKRLQQLVEVLKGGSTFSGAKRVDTAAAAAEATEIPEVTLAS.

The first 16 residues, 1–16 (MLPTAVLLVLVVSVVA), serve as a signal peptide directing secretion. An N-linked (GlcNAc...) asparagine glycan is attached at Asn19. Intrachain disulfides connect Cys22/Cys152, Cys26/Cys160, Cys71/Cys87, Cys175/Cys244, Cys207/Cys223, and Cys234/Cys264. In terms of domain architecture, Peptidase S1 spans 40–288 (VVGGQAAQQG…FLDWIASRIG (249 aa)). Catalysis depends on charge relay system residues His86 and Asp140. The N-linked (GlcNAc...) asparagine glycan is linked to Asn208. Ser238 (charge relay system) is an active-site residue. The segment at 295-385 (IQPATPTPPT…PPPASTKPPQ (91 aa)) is disordered. Over residues 331–341 (PHPHPHPHPHP) the composition is skewed to basic residues. The segment covering 342 to 381 (RPPQPPAAQAPPPPPPPPPPPPPPPPPPPPPPPPPPPAST) has biased composition (pro residues). The propeptide at 351 to 431 (APPPPPPPPP…TEIPEVTLAS (81 aa)) is pro-rich.

Belongs to the peptidase S1 family. In terms of assembly, heavy chain (catalytic) and a light chain linked by two disulfide bonds. Forms a heterodimer with SERPINA5.

It catalyses the reaction Preferential cleavage: Arg-|-Xaa, Lys-|-Xaa.. Inhibited by SERPINA5. In terms of biological role, acrosin is the major protease of mammalian spermatozoa. It is a serine protease of trypsin-like cleavage specificity, it is synthesized in a zymogen form, proacrosin and stored in the acrosome. The sequence is that of Acrosin (ACR) from Oryctolagus cuniculus (Rabbit).